We begin with the raw amino-acid sequence, 570 residues long: Protein FAM227A (570 aa).

Basic and acidic residues predominate over residues 87-99; sequence LREKTRSSPEDKV. Disordered stretches follow at residues 87-112, 336-374, and 519-570; these read LREK…CKGS, PAQS…QNTA, and KAAD…TSKP. At Tyr-343 the chain carries Phosphotyrosine. Over residues 345–362 the composition is skewed to polar residues; it reads PQSSSANSPSEKTSSAKQ. 2 positions are modified to phosphoserine: Ser-348 and Ser-349. Composition is skewed to basic and acidic residues over residues 363-374 and 540-562; these read NSEKSLRMQNTA and SPDK…EVEH.

The protein belongs to the FAM227 family.

The sequence is that of Protein FAM227A (FAM227A) from Homo sapiens (Human).